We begin with the raw amino-acid sequence, 213 residues long: Octanoyltransferase (213 aa).

Positions 27 to 209 constitute a BPL/LPL catalytic domain; that stretch reads AATPDEVWLC…RLLAAMPEPA (183 aa). Residues 66–73, 140–142, and 153–155 each bind substrate; these read RGGQVTYH, ALG, and GVA. Residue Cys171 is the Acyl-thioester intermediate of the active site.

The protein belongs to the LipB family.

Its subcellular location is the cytoplasm. It carries out the reaction octanoyl-[ACP] + L-lysyl-[protein] = N(6)-octanoyl-L-lysyl-[protein] + holo-[ACP] + H(+). Its pathway is protein modification; protein lipoylation via endogenous pathway; protein N(6)-(lipoyl)lysine from octanoyl-[acyl-carrier-protein]: step 1/2. Catalyzes the transfer of endogenously produced octanoic acid from octanoyl-acyl-carrier-protein onto the lipoyl domains of lipoate-dependent enzymes. Lipoyl-ACP can also act as a substrate although octanoyl-ACP is likely to be the physiological substrate. This is Octanoyltransferase from Bordetella petrii (strain ATCC BAA-461 / DSM 12804 / CCUG 43448).